Here is a 91-residue protein sequence, read N- to C-terminus: Acylphosphatase (91 aa).

The Acylphosphatase-like domain occupies 3-89; sequence AKHLILSGRV…PAEPGFVKRA (87 aa). Catalysis depends on residues R18 and N36.

The protein belongs to the acylphosphatase family.

It carries out the reaction an acyl phosphate + H2O = a carboxylate + phosphate + H(+). This Acidiphilium cryptum (strain JF-5) protein is Acylphosphatase (acyP).